The chain runs to 258 residues: Acyl-[acyl-carrier-protein]--UDP-N-acetylglucosamine O-acyltransferase (258 aa).

This sequence belongs to the transferase hexapeptide repeat family. LpxA subfamily. As to quaternary structure, homotrimer.

The protein resides in the cytoplasm. It carries out the reaction a (3R)-hydroxyacyl-[ACP] + UDP-N-acetyl-alpha-D-glucosamine = a UDP-3-O-[(3R)-3-hydroxyacyl]-N-acetyl-alpha-D-glucosamine + holo-[ACP]. The protein operates within glycolipid biosynthesis; lipid IV(A) biosynthesis; lipid IV(A) from (3R)-3-hydroxytetradecanoyl-[acyl-carrier-protein] and UDP-N-acetyl-alpha-D-glucosamine: step 1/6. Involved in the biosynthesis of lipid A, a phosphorylated glycolipid that anchors the lipopolysaccharide to the outer membrane of the cell. The polypeptide is Acyl-[acyl-carrier-protein]--UDP-N-acetylglucosamine O-acyltransferase (Azotobacter vinelandii (strain DJ / ATCC BAA-1303)).